The primary structure comprises 506 residues: MVMEGMGMAAAWAAGDLWVLAAAVVAGVVLVDAVVRRAHDWVRVAALGAERRSRLPPGEMGWPMVGSMWAFLRAFKSGNPDAFIASFIRRFGRTGVYRTFMFSSPTILAVTPEACKQVLMDDEGFVTGWPKATVTLIGPKSFVNMSYDDHRRIRKLTAAPINGFDALTTYLSFIDQTVVASLRRWSSPESGQVEFLTELRRMTFKIIVQIFMSGADDATMEALERSYTDLNYGMRAMAINLPGFAYYRALRARRKLVSVLQGVLDGRRAAAAKGFKRSGAMDMMDRLIEAEDERGRRLADDEIVDVLIMYLNAGHESSGHITMWATVFLQENPDIFARAKAEQEEIMRSIPATQNGLTLRDFKKMHFLSQVVDETLRCVNISFVSFRQATRDIFVNGYLIPKGWKVQLWYRSVHMDDQVYPDPKMFNPSRWEGPPPKAGTFLPFGLGARLCPGNDLAKLEISVFLHHFLLGYKLKRANPKCRVRYLPHPRPVDNCLATITKVSDEH.

The chain crosses the membrane as a helical span at residues 11 to 31 (AWAAGDLWVLAAAVVAGVVLV). Position 451 (Cys451) interacts with heme.

Belongs to the cytochrome P450 family. Heme is required as a cofactor. In terms of tissue distribution, expressed in roots and panicles. Expressed at low levels in vegetative shoot apices, leaf sheaths, leaf blades and stems.

Its subcellular location is the endoplasmic reticulum membrane. The catalysed reaction is ent-kaur-16-en-19-oate + 3 reduced [NADPH--hemoprotein reductase] + 3 O2 = gibberellin A12 + 3 oxidized [NADPH--hemoprotein reductase] + 4 H2O + 4 H(+). It carries out the reaction ent-kaur-16-en-19-oate + reduced [NADPH--hemoprotein reductase] + O2 = ent-7alpha-hydroxykaur-16-en-19-oate + oxidized [NADPH--hemoprotein reductase] + H2O + H(+). It catalyses the reaction ent-7alpha-hydroxykaur-16-en-19-oate + reduced [NADPH--hemoprotein reductase] + O2 = gibberellin A12 aldehyde + oxidized [NADPH--hemoprotein reductase] + 2 H2O + H(+). The enzyme catalyses gibberellin A12 aldehyde + reduced [NADPH--hemoprotein reductase] + O2 = gibberellin A12 + oxidized [NADPH--hemoprotein reductase] + H2O + 2 H(+). Its pathway is plant hormone biosynthesis; gibberellin biosynthesis. Functionally, involved in gibberellin (GA) biosynthesis. Catalyzes three successive oxidations of ent-kaurenoic acid giving gibberellin 12 (GA12), a key step in GAs biosynthesis. GAs, which are involved many processes, including stem elongation, play a central role in plant development. Required for pollen germination and elongation. The protein is Ent-kaurenoic acid oxidase of Oryza sativa subsp. japonica (Rice).